A 597-amino-acid chain; its full sequence is Elongation factor 4 (597 aa).

The tr-type G domain maps to 2-184 (KNIRNFSIIA…RLVRDIPAPE (183 aa)). GTP is bound by residues 14–19 (DHGKST) and 131–134 (NKID).

It belongs to the TRAFAC class translation factor GTPase superfamily. Classic translation factor GTPase family. LepA subfamily.

It is found in the cell inner membrane. The enzyme catalyses GTP + H2O = GDP + phosphate + H(+). Required for accurate and efficient protein synthesis under certain stress conditions. May act as a fidelity factor of the translation reaction, by catalyzing a one-codon backward translocation of tRNAs on improperly translocated ribosomes. Back-translocation proceeds from a post-translocation (POST) complex to a pre-translocation (PRE) complex, thus giving elongation factor G a second chance to translocate the tRNAs correctly. Binds to ribosomes in a GTP-dependent manner. The protein is Elongation factor 4 of Edwardsiella ictaluri (strain 93-146).